The primary structure comprises 168 residues: uncharacterized protein (168 aa).

Residues 1–166 form the PfpI endopeptidase domain; that stretch reads MRVLILAENE…FCGELIKILK (166 aa).

Belongs to the peptidase C56 family.

This is an uncharacterized protein from Archaeoglobus fulgidus (strain ATCC 49558 / DSM 4304 / JCM 9628 / NBRC 100126 / VC-16).